Reading from the N-terminus, the 349-residue chain is 4-hydroxythreonine-4-phosphate dehydrogenase (349 aa).

Residues His-141 and Thr-142 each coordinate substrate. The a divalent metal cation site is built by His-176, His-221, and His-276. Positions 284, 293, and 302 each coordinate substrate.

Belongs to the PdxA family. As to quaternary structure, homodimer. It depends on Zn(2+) as a cofactor. Requires Mg(2+) as cofactor. Co(2+) serves as cofactor.

The protein resides in the cytoplasm. The catalysed reaction is 4-(phosphooxy)-L-threonine + NAD(+) = 3-amino-2-oxopropyl phosphate + CO2 + NADH. Its pathway is cofactor biosynthesis; pyridoxine 5'-phosphate biosynthesis; pyridoxine 5'-phosphate from D-erythrose 4-phosphate: step 4/5. In terms of biological role, catalyzes the NAD(P)-dependent oxidation of 4-(phosphooxy)-L-threonine (HTP) into 2-amino-3-oxo-4-(phosphooxy)butyric acid which spontaneously decarboxylates to form 3-amino-2-oxopropyl phosphate (AHAP). The protein is 4-hydroxythreonine-4-phosphate dehydrogenase of Methylorubrum populi (strain ATCC BAA-705 / NCIMB 13946 / BJ001) (Methylobacterium populi).